The primary structure comprises 187 residues: UPF0232 protein JTY_0004 (187 aa).

2 stretches are compositionally biased toward basic and acidic residues: residues 1–17 (MTGSVDRPDQNRGERSM) and 24–45 (LVRRTLDEARAAARARGQDAGR). Disordered stretches follow at residues 1-75 (MTGS…DPQP) and 168-187 (PSWRKGPRHIAGRGPRDTYG).

The protein belongs to the UPF0232 family.

The polypeptide is UPF0232 protein JTY_0004 (Mycobacterium bovis (strain BCG / Tokyo 172 / ATCC 35737 / TMC 1019)).